Here is a 390-residue protein sequence, read N- to C-terminus: Transforming growth factor beta-1 proprotein (390 aa).

The signal sequence occupies residues 1–29 (MPPSGLRLLPLLLPLLWLLVLTPGRPAAG). The tract at residues 30-74 (LSTCKTIDMELVKRKRIEAIRGQILSKLRLASPPSQGDVPPGPLP) is straightjacket domain. The segment at 75–271 (EAVLALYNST…ATPLERAQHL (197 aa)) is arm domain. N-linked (GlcNAc...) asparagine glycans are attached at residues Asn82, Asn136, and Asn176. The tract at residues 226-252 (DSKDNTLHVEINGFNSGRRGDLATIHG) is bowtie tail. The Cell attachment site signature appears at 244 to 246 (RGD). Disulfide bonds link Cys285–Cys294, Cys293–Cys356, Cys322–Cys387, and Cys326–Cys389.

The protein belongs to the TGF-beta family. As to quaternary structure, homodimer; disulfide-linked. Interacts with the serine proteases, HTRA1 and HTRA3: the interaction with either inhibits TGFB1-mediated signaling and the HTRA protease activity is required for this inhibition. May interact with THSD4; this interaction may lead to sequestration by FBN1 microfibril assembly and attenuation of TGFB signaling. Interacts with CD109, DPT and ASPN. Interacts with EFEMP2. Interacts with TSKU; the interaction contributes to regulation of the hair cycle. Interacts with TGFBR3. Homodimer; disulfide-linked. Interacts with transforming growth factor beta-1 (TGF-beta-1) chain; interaction is non-covalent and maintains TGF-beta-1 in a latent state; each latency-associated peptide (LAP) monomer interacts with TGF-beta-1 in the other monomer. Interacts with LTBP1; leading to regulation of TGF-beta-1 activation. Interacts with LRRC32/GARP; leading to regulation of TGF-beta-1 activation on the surface of activated regulatory T-cells (Tregs). Interacts with LRRC33/NRROS; leading to regulation of TGF-beta-1 activation in macrophages and microglia. Interacts (via cell attachment site) with integrins ITGAV and ITGB6 (ITGAV:ITGB6), leading to release of the active TGF-beta-1. Interacts with NREP; the interaction results in a decrease in TGFB1 autoinduction. Interacts with HSP90AB1; inhibits latent TGFB1 activation. In terms of assembly, homodimer; disulfide-linked. Interacts with TGF-beta receptors (TGFBR1 and TGFBR2), leading to signal transduction. Transforming growth factor beta-1 proprotein: The precursor proprotein is cleaved in the Golgi apparatus by FURIN to form Transforming growth factor beta-1 (TGF-beta-1) and Latency-associated peptide (LAP) chains, which remain non-covalently linked, rendering TGF-beta-1 inactive. Post-translationally, N-glycosylated. Deglycosylation leads to activation of Transforming growth factor beta-1 (TGF-beta-1); mechanisms triggering deglycosylation-driven activation of TGF-beta-1 are however unclear.

The protein localises to the secreted. The protein resides in the extracellular space. Its subcellular location is the extracellular matrix. Functionally, transforming growth factor beta-1 proprotein: Precursor of the Latency-associated peptide (LAP) and Transforming growth factor beta-1 (TGF-beta-1) chains, which constitute the regulatory and active subunit of TGF-beta-1, respectively. Required to maintain the Transforming growth factor beta-1 (TGF-beta-1) chain in a latent state during storage in extracellular matrix. Associates non-covalently with TGF-beta-1 and regulates its activation via interaction with 'milieu molecules', such as LTBP1, LRRC32/GARP and LRRC33/NRROS, that control activation of TGF-beta-1. Interaction with LRRC33/NRROS regulates activation of TGF-beta-1 in macrophages and microglia. Interaction with LRRC32/GARP controls activation of TGF-beta-1 on the surface of activated regulatory T-cells (Tregs). Interaction with integrins (ITGAV:ITGB6 or ITGAV:ITGB8) results in distortion of the Latency-associated peptide chain and subsequent release of the active TGF-beta-1. In terms of biological role, multifunctional protein that regulates the growth and differentiation of various cell types and is involved in various processes, such as normal development, immune function, microglia function and responses to neurodegeneration. Activation into mature form follows different steps: following cleavage of the proprotein in the Golgi apparatus, Latency-associated peptide (LAP) and Transforming growth factor beta-1 (TGF-beta-1) chains remain non-covalently linked rendering TGF-beta-1 inactive during storage in extracellular matrix. At the same time, LAP chain interacts with 'milieu molecules', such as LTBP1, LRRC32/GARP and LRRC33/NRROS that control activation of TGF-beta-1 and maintain it in a latent state during storage in extracellular milieus. TGF-beta-1 is released from LAP by integrins (ITGAV:ITGB6 or ITGAV:ITGB8): integrin-binding to LAP stabilizes an alternative conformation of the LAP bowtie tail and results in distortion of the LAP chain and subsequent release of the active TGF-beta-1. Once activated following release of LAP, TGF-beta-1 acts by binding to TGF-beta receptors (TGFBR1 and TGFBR2), which transduce signal. While expressed by many cells types, TGF-beta-1 only has a very localized range of action within cell environment thanks to fine regulation of its activation by Latency-associated peptide chain (LAP) and 'milieu molecules'. Plays an important role in bone remodeling: acts as a potent stimulator of osteoblastic bone formation, causing chemotaxis, proliferation and differentiation in committed osteoblasts. Can promote either T-helper 17 cells (Th17) or regulatory T-cells (Treg) lineage differentiation in a concentration-dependent manner. At high concentrations, leads to FOXP3-mediated suppression of RORC and down-regulation of IL-17 expression, favoring Treg cell development. At low concentrations in concert with IL-6 and IL-21, leads to expression of the IL-17 and IL-23 receptors, favoring differentiation to Th17 cells. Stimulates sustained production of collagen through the activation of CREB3L1 by regulated intramembrane proteolysis (RIP). Mediates SMAD2/3 activation by inducing its phosphorylation and subsequent translocation to the nucleus. Positively regulates odontoblastic differentiation in dental papilla cells, via promotion of IPO7-mediated translocation of phosphorylated SMAD2 to the nucleus and subsequent transcription of target genes. Can induce epithelial-to-mesenchymal transition (EMT) and cell migration in various cell types. This is Transforming growth factor beta-1 proprotein (TGFB1) from Sus scrofa (Pig).